The following is a 228-amino-acid chain: Lactate utilization protein A (228 aa).

The protein belongs to the LutA/YkgE family.

Functionally, is involved in L-lactate degradation and allows cells to grow with lactate as the sole carbon source. The polypeptide is Lactate utilization protein A (Lysinibacillus sphaericus (strain C3-41)).